The following is a 161-amino-acid chain: Putative 2'-deoxynucleoside 5'-phosphate N-hydrolase 1 (161 aa).

Residues 27 to 33 (FLSGSIR), Tyr-42, His-60, Glu-106, and 128 to 130 (SSM) contribute to the substrate site.

It belongs to the 2'-deoxynucleoside 5'-phosphate N-hydrolase 1 family. Monomer and homodimer.

It carries out the reaction a pyrimidine 2'-deoxyribonucleoside 5'-phosphate + H2O = a pyrimidine nucleobase + 2-deoxy-D-ribose 5-phosphate. It catalyses the reaction a purine 2'-deoxyribonucleoside 5'-phosphate + H2O = a purine nucleobase + 2-deoxy-D-ribose 5-phosphate. In terms of biological role, catalyzes the cleavage of the N-glycosidic bond of deoxyribonucleoside 5'-monophosphates to yield deoxyribose 5-phosphate and a purine or pyrimidine base. This chain is Putative 2'-deoxynucleoside 5'-phosphate N-hydrolase 1, found in Methanosarcina mazei (strain ATCC BAA-159 / DSM 3647 / Goe1 / Go1 / JCM 11833 / OCM 88) (Methanosarcina frisia).